Reading from the N-terminus, the 409-residue chain is Argininosuccinate synthase (409 aa).

Residues 10–18 and A37 each bind ATP; that span reads AYSGGLDTS. 2 residues coordinate L-citrulline: Y90 and S95. ATP is bound at residue G120. Residues T122, N126, and D127 each contribute to the L-aspartate site. Position 126 (N126) interacts with L-citrulline. R130, S182, S191, E267, and Y279 together coordinate L-citrulline.

It belongs to the argininosuccinate synthase family. Type 1 subfamily. In terms of assembly, homotetramer.

The protein localises to the cytoplasm. It carries out the reaction L-citrulline + L-aspartate + ATP = 2-(N(omega)-L-arginino)succinate + AMP + diphosphate + H(+). It participates in amino-acid biosynthesis; L-arginine biosynthesis; L-arginine from L-ornithine and carbamoyl phosphate: step 2/3. The protein is Argininosuccinate synthase of Aromatoleum aromaticum (strain DSM 19018 / LMG 30748 / EbN1) (Azoarcus sp. (strain EbN1)).